A 690-amino-acid chain; its full sequence is UvrABC system protein B (690 aa).

The Helicase ATP-binding domain maps to 39-422 (EGLDDGLSFQ…EQQHAGQVVE (384 aa)). 52–59 (GVTGSGKT) contacts ATP. The Beta-hairpin motif lies at 105 to 128 (YYDYYQPEAYVPSRDLFIEKDSSI). The Helicase C-terminal domain maps to 443 to 596 (QVDDLLAEIG…QIAFNLEHGI (154 aa)). The 36-residue stretch at 640–675 (AREIKRLEKSMMECAKNLEFEKAAAARDDLFRLRER) folds into the UVR domain.

The protein belongs to the UvrB family. Forms a heterotetramer with UvrA during the search for lesions. Interacts with UvrC in an incision complex.

The protein localises to the cytoplasm. The UvrABC repair system catalyzes the recognition and processing of DNA lesions. A damage recognition complex composed of 2 UvrA and 2 UvrB subunits scans DNA for abnormalities. Upon binding of the UvrA(2)B(2) complex to a putative damaged site, the DNA wraps around one UvrB monomer. DNA wrap is dependent on ATP binding by UvrB and probably causes local melting of the DNA helix, facilitating insertion of UvrB beta-hairpin between the DNA strands. Then UvrB probes one DNA strand for the presence of a lesion. If a lesion is found the UvrA subunits dissociate and the UvrB-DNA preincision complex is formed. This complex is subsequently bound by UvrC and the second UvrB is released. If no lesion is found, the DNA wraps around the other UvrB subunit that will check the other stand for damage. This chain is UvrABC system protein B, found in Dechloromonas aromatica (strain RCB).